Consider the following 245-residue polypeptide: 1-(5-phosphoribosyl)-5-[(5-phosphoribosylamino)methylideneamino] imidazole-4-carboxamide isomerase (245 aa).

Aspartate 7 functions as the Proton acceptor in the catalytic mechanism. The active-site Proton donor is the aspartate 129.

This sequence belongs to the HisA/HisF family.

It localises to the cytoplasm. The catalysed reaction is 1-(5-phospho-beta-D-ribosyl)-5-[(5-phospho-beta-D-ribosylamino)methylideneamino]imidazole-4-carboxamide = 5-[(5-phospho-1-deoxy-D-ribulos-1-ylimino)methylamino]-1-(5-phospho-beta-D-ribosyl)imidazole-4-carboxamide. It participates in amino-acid biosynthesis; L-histidine biosynthesis; L-histidine from 5-phospho-alpha-D-ribose 1-diphosphate: step 4/9. In Shewanella pealeana (strain ATCC 700345 / ANG-SQ1), this protein is 1-(5-phosphoribosyl)-5-[(5-phosphoribosylamino)methylideneamino] imidazole-4-carboxamide isomerase.